The sequence spans 166 residues: NADH-quinone oxidoreductase subunit C (166 aa).

The protein belongs to the complex I 30 kDa subunit family. NDH-1 is composed of 14 different subunits. Subunits NuoB, C, D, E, F, and G constitute the peripheral sector of the complex.

The protein resides in the cell inner membrane. It carries out the reaction a quinone + NADH + 5 H(+)(in) = a quinol + NAD(+) + 4 H(+)(out). Its function is as follows. NDH-1 shuttles electrons from NADH, via FMN and iron-sulfur (Fe-S) centers, to quinones in the respiratory chain. The immediate electron acceptor for the enzyme in this species is believed to be a menaquinone. Couples the redox reaction to proton translocation (for every two electrons transferred, four hydrogen ions are translocated across the cytoplasmic membrane), and thus conserves the redox energy in a proton gradient. This chain is NADH-quinone oxidoreductase subunit C, found in Chlorobium phaeobacteroides (strain DSM 266 / SMG 266 / 2430).